The chain runs to 307 residues: tRNA dimethylallyltransferase 2 (307 aa).

Position 11 to 18 (11 to 18 (GPTASGKT)) interacts with ATP. Substrate is bound at residue 13–18 (TASGKT). Positions 36–39 (DSRQ) are interaction with substrate tRNA.

The protein belongs to the IPP transferase family. Monomer. The cofactor is Mg(2+).

The enzyme catalyses adenosine(37) in tRNA + dimethylallyl diphosphate = N(6)-dimethylallyladenosine(37) in tRNA + diphosphate. Catalyzes the transfer of a dimethylallyl group onto the adenine at position 37 in tRNAs that read codons beginning with uridine, leading to the formation of N6-(dimethylallyl)adenosine (i(6)A). This chain is tRNA dimethylallyltransferase 2, found in Phocaeicola vulgatus (strain ATCC 8482 / DSM 1447 / JCM 5826 / CCUG 4940 / NBRC 14291 / NCTC 11154) (Bacteroides vulgatus).